Reading from the N-terminus, the 210-residue chain is Resolvase (210 aa).

Residues 6 to 150 (VARVYLRVSS…EDRRERQRQG (145 aa)) form the Resolvase/invertase-type recombinase catalytic domain. Catalysis depends on serine 14, which acts as the O-(5'-phospho-DNA)-serine intermediate. The segment at residues 191 to 210 (GVSVSQVKRVWAQNQTKDKV) is a DNA-binding region (H-T-H motif).

The protein belongs to the site-specific recombinase resolvase family.

Site-specific recombination protein. This Pseudomonas syringae pv. tomato protein is Resolvase (stbA).